Here is a 200-residue protein sequence, read N- to C-terminus: Imidazole glycerol phosphate synthase subunit HisH (200 aa).

In terms of domain architecture, Glutamine amidotransferase type-1 spans 3–200 (DVALIDAGGA…LHNFLEMSFP (198 aa)). Catalysis depends on Cys78, which acts as the Nucleophile. Catalysis depends on residues His179 and Glu181.

Heterodimer of HisH and HisF.

Its subcellular location is the cytoplasm. The enzyme catalyses 5-[(5-phospho-1-deoxy-D-ribulos-1-ylimino)methylamino]-1-(5-phospho-beta-D-ribosyl)imidazole-4-carboxamide + L-glutamine = D-erythro-1-(imidazol-4-yl)glycerol 3-phosphate + 5-amino-1-(5-phospho-beta-D-ribosyl)imidazole-4-carboxamide + L-glutamate + H(+). The catalysed reaction is L-glutamine + H2O = L-glutamate + NH4(+). It functions in the pathway amino-acid biosynthesis; L-histidine biosynthesis; L-histidine from 5-phospho-alpha-D-ribose 1-diphosphate: step 5/9. Functionally, IGPS catalyzes the conversion of PRFAR and glutamine to IGP, AICAR and glutamate. The HisH subunit catalyzes the hydrolysis of glutamine to glutamate and ammonia as part of the synthesis of IGP and AICAR. The resulting ammonia molecule is channeled to the active site of HisF. The protein is Imidazole glycerol phosphate synthase subunit HisH of Xanthomonas oryzae pv. oryzae (strain MAFF 311018).